Reading from the N-terminus, the 326-residue chain is tRNA-modifying protein YgfZ (326 aa).

2 residues coordinate folate: tryptophan 27 and tryptophan 189.

This sequence belongs to the tRNA-modifying YgfZ family.

The protein resides in the cytoplasm. Its function is as follows. Folate-binding protein involved in regulating the level of ATP-DnaA and in the modification of some tRNAs. It is probably a key factor in regulatory networks that act via tRNA modification, such as initiation of chromosomal replication. In Escherichia coli O7:K1 (strain IAI39 / ExPEC), this protein is tRNA-modifying protein YgfZ.